Here is a 100-residue protein sequence, read N- to C-terminus: Small ribosomal subunit protein uS14c (100 aa).

This sequence belongs to the universal ribosomal protein uS14 family. As to quaternary structure, part of the 30S ribosomal subunit.

The protein localises to the plastid. It is found in the chloroplast. Its function is as follows. Binds 16S rRNA, required for the assembly of 30S particles. The protein is Small ribosomal subunit protein uS14c of Phaeodactylum tricornutum (strain CCAP 1055/1).